Reading from the N-terminus, the 169-residue chain is Der GTPase-activating protein YihI (169 aa).

Disordered regions lie at residues 1 to 98 and 144 to 169; these read MKPS…PQAE and GLSY…LRGN. Over residues 10–19 the composition is skewed to basic residues; the sequence is SKGHAKARRK. The segment covering 20-30 has biased composition (basic and acidic residues); it reads TREELDQEARD. The span at 31–40 shows a compositional bias: basic residues; it reads RKRLKKRRGH. Residues 49–58 are compositionally biased toward polar residues; sequence GNTTSGSKGQ. Positions 147–159 are enriched in acidic residues; it reads YDDDEEEEEDEKQ. A compositionally biased stretch (basic and acidic residues) spans 160–169; sequence EDMMRLLRGN.

The protein belongs to the YihI family. In terms of assembly, interacts with Der.

A GTPase-activating protein (GAP) that modifies Der/EngA GTPase function. May play a role in ribosome biogenesis. In Escherichia coli O6:K15:H31 (strain 536 / UPEC), this protein is Der GTPase-activating protein YihI.